The following is a 327-amino-acid chain: Phenylalanine--tRNA ligase alpha subunit (327 aa).

A Mg(2+)-binding site is contributed by Glu-252.

This sequence belongs to the class-II aminoacyl-tRNA synthetase family. Phe-tRNA synthetase alpha subunit type 1 subfamily. As to quaternary structure, tetramer of two alpha and two beta subunits. It depends on Mg(2+) as a cofactor.

The protein localises to the cytoplasm. It carries out the reaction tRNA(Phe) + L-phenylalanine + ATP = L-phenylalanyl-tRNA(Phe) + AMP + diphosphate + H(+). The polypeptide is Phenylalanine--tRNA ligase alpha subunit (Cronobacter sakazakii (strain ATCC BAA-894) (Enterobacter sakazakii)).